Reading from the N-terminus, the 173-residue chain is Ribosome maturation factor RimM (173 aa).

One can recognise a PRC barrel domain in the interval E95–L169.

The protein belongs to the RimM family. Binds ribosomal protein uS19.

It is found in the cytoplasm. An accessory protein needed during the final step in the assembly of 30S ribosomal subunit, possibly for assembly of the head region. Essential for efficient processing of 16S rRNA. May be needed both before and after RbfA during the maturation of 16S rRNA. It has affinity for free ribosomal 30S subunits but not for 70S ribosomes. The chain is Ribosome maturation factor RimM from Lactobacillus gasseri (strain ATCC 33323 / DSM 20243 / BCRC 14619 / CIP 102991 / JCM 1131 / KCTC 3163 / NCIMB 11718 / NCTC 13722 / AM63).